Reading from the N-terminus, the 115-residue chain is Nucleoid-associated protein Rpic_1036 (115 aa).

It belongs to the YbaB/EbfC family. Homodimer.

The protein resides in the cytoplasm. The protein localises to the nucleoid. Its function is as follows. Binds to DNA and alters its conformation. May be involved in regulation of gene expression, nucleoid organization and DNA protection. The chain is Nucleoid-associated protein Rpic_1036 from Ralstonia pickettii (strain 12J).